The following is a 310-amino-acid chain: NADP-dependent D-sorbitol-6-phosphate dehydrogenase (310 aa).

Tyr48 acts as the Proton donor in catalysis. Residue His108 participates in substrate binding. NADP(+) is bound at residue 210 to 272 (TPLGGAAANK…SSKIQRLKEN (63 aa)).

This sequence belongs to the aldo/keto reductase family.

The catalysed reaction is D-sorbitol 6-phosphate + NADP(+) = aldehydo-D-glucose 6-phosphate + NADPH + H(+). Its function is as follows. Synthesizes sorbitol-6-phosphate, a key intermediate in the synthesis of sorbitol which is a major photosynthetic product in many members of the Rosaceae family. The protein is NADP-dependent D-sorbitol-6-phosphate dehydrogenase (S6PDH) of Malus domestica (Apple).